A 349-amino-acid chain; its full sequence is Rhodopsin (349 aa).

The Extracellular segment spans residues 1-33 (TEGPYFYIPMSNATGIVRSPYEYPQYYLVYPAA). The N-linked (GlcNAc...) asparagine glycan is linked to Asn-12. The chain crosses the membrane as a helical span at residues 34–58 (YAVLGAYMFFLIIFGFPVNFLTLYV). Over 59-70 (TIEHKKLRTPLN) the chain is Cytoplasmic. A helical transmembrane segment spans residues 71-93 (YILLNLAVADLFMVIGGFTTTIY). Residues 94–107 (TSMHGYFVLGRLGC) lie on the Extracellular side of the membrane. An intrachain disulfide couples Cys-107 to Cys-184. The helical transmembrane segment at 108-130 (NLEGFSATLGGMIGLWSLVVLAI) threads the bilayer. A 'Ionic lock' involved in activated form stabilization motif is present at residues 131–133 (ERW). The Cytoplasmic segment spans residues 131-149 (ERWVVVCKPMSNFRFGENH). The helical transmembrane segment at 150–170 (AIMGVTLTWVMGLACTVPPLV) threads the bilayer. At 171–199 (GWSRYIPEGMQCSCGIDYYTRAEGFNNDS) the chain is on the extracellular side. An N-linked (GlcNAc...) asparagine glycan is attached at Asn-197. A helical transmembrane segment spans residues 200–221 (YVLYMFVCHFLIPLVVIFFCYG). Residues 222–249 (RLLCAVKEAAAAQQESETTQRAEREVTR) are Cytoplasmic-facing. A helical membrane pass occupies residues 250-271 (MVILMVIGFLVCWLPYASVAWY). Over 272–283 (IFTHQGSEFGPL) the chain is Extracellular. Residues 284-305 (FMTIPAFFAKSSSIYNPVIYIC) form a helical membrane-spanning segment. At Lys-293 the chain carries N6-(retinylidene)lysine. The Cytoplasmic segment spans residues 306–349 (MNKQFRQCMLTTLFCGKNPFEEEEGASSTKTEASSASSSSVSPA). Residue Cys-320 is the site of S-palmitoyl cysteine attachment. Residues 326-349 (EEEEGASSTKTEASSASSSSVSPA) are disordered. The segment covering 331–349 (ASSTKTEASSASSSSVSPA) has biased composition (low complexity).

The protein belongs to the G-protein coupled receptor 1 family. Opsin subfamily. In terms of processing, phosphorylated on some or all of the serine and threonine residues present in the C-terminal region. Contains one covalently linked retinal chromophore.

The protein localises to the membrane. It localises to the cell projection. The protein resides in the cilium. It is found in the photoreceptor outer segment. In terms of biological role, photoreceptor required for image-forming vision at low light intensity. While most salt water fish species use retinal as chromophore, most freshwater fish use 3-dehydroretinal, or a mixture of retinal and 3-dehydroretinal. Light-induced isomerization of 11-cis to all-trans retinal triggers a conformational change that activates signaling via G-proteins. Subsequent receptor phosphorylation mediates displacement of the bound G-protein alpha subunit by arrestin and terminates signaling. This is Rhodopsin (rho) from Myripristis violacea (Lattice soldierfish).